The chain runs to 123 residues: Aspartate 1-decarboxylase (123 aa).

The active-site Schiff-base intermediate with substrate; via pyruvic acid is the Ser25. Ser25 bears the Pyruvic acid (Ser) mark. Thr57 lines the substrate pocket. The Proton donor role is filled by Tyr58. 73 to 75 provides a ligand contact to substrate; the sequence is GAA.

The protein belongs to the PanD family. In terms of assembly, heterooctamer of four alpha and four beta subunits. Requires pyruvate as cofactor. In terms of processing, is synthesized initially as an inactive proenzyme, which is activated by self-cleavage at a specific serine bond to produce a beta-subunit with a hydroxyl group at its C-terminus and an alpha-subunit with a pyruvoyl group at its N-terminus.

Its subcellular location is the cytoplasm. The enzyme catalyses L-aspartate + H(+) = beta-alanine + CO2. It functions in the pathway cofactor biosynthesis; (R)-pantothenate biosynthesis; beta-alanine from L-aspartate: step 1/1. In terms of biological role, catalyzes the pyruvoyl-dependent decarboxylation of aspartate to produce beta-alanine. The chain is Aspartate 1-decarboxylase from Clostridium novyi (strain NT).